The following is a 325-amino-acid chain: Ribose-phosphate pyrophosphokinase (325 aa).

Residues 45–47 and 104–105 contribute to the ATP site; these read NGE and RQ. Residues His138 and Asp178 each coordinate Mg(2+). Residue Lys202 is part of the active site. Residues Arg204, Asp230, and 234 to 238 contribute to the D-ribose 5-phosphate site; that span reads DTGGT.

It belongs to the ribose-phosphate pyrophosphokinase family. Class I subfamily. Homohexamer. The cofactor is Mg(2+).

It localises to the cytoplasm. The enzyme catalyses D-ribose 5-phosphate + ATP = 5-phospho-alpha-D-ribose 1-diphosphate + AMP + H(+). It participates in metabolic intermediate biosynthesis; 5-phospho-alpha-D-ribose 1-diphosphate biosynthesis; 5-phospho-alpha-D-ribose 1-diphosphate from D-ribose 5-phosphate (route I): step 1/1. Its function is as follows. Involved in the biosynthesis of the central metabolite phospho-alpha-D-ribosyl-1-pyrophosphate (PRPP) via the transfer of pyrophosphoryl group from ATP to 1-hydroxyl of ribose-5-phosphate (Rib-5-P). The polypeptide is Ribose-phosphate pyrophosphokinase (Corynebacterium glutamicum (strain ATCC 13032 / DSM 20300 / JCM 1318 / BCRC 11384 / CCUG 27702 / LMG 3730 / NBRC 12168 / NCIMB 10025 / NRRL B-2784 / 534)).